The chain runs to 211 residues: Protein-L-isoaspartate O-methyltransferase (211 aa).

Ser-60 is a catalytic residue.

This sequence belongs to the methyltransferase superfamily. L-isoaspartyl/D-aspartyl protein methyltransferase family.

It localises to the cytoplasm. The catalysed reaction is [protein]-L-isoaspartate + S-adenosyl-L-methionine = [protein]-L-isoaspartate alpha-methyl ester + S-adenosyl-L-homocysteine. Catalyzes the methyl esterification of L-isoaspartyl residues in peptides and proteins that result from spontaneous decomposition of normal L-aspartyl and L-asparaginyl residues. It plays a role in the repair and/or degradation of damaged proteins. In Pseudomonas savastanoi pv. phaseolicola (strain 1448A / Race 6) (Pseudomonas syringae pv. phaseolicola (strain 1448A / Race 6)), this protein is Protein-L-isoaspartate O-methyltransferase.